An 863-amino-acid polypeptide reads, in one-letter code: Chloride channel protein A (863 aa).

At 1–124 the chain is on the cytoplasmic side; it reads MFRNNNNDNN…TSKLNHMLKT (124 aa). Positions 48–78 are disordered; sequence ENGLINNNNNSHNNNNGGNNNNHGPSKVTHR. The span at 49–71 shows a compositional bias: low complexity; the sequence is NGLINNNNNSHNNNNGGNNNNHG. A run of 7 helical transmembrane segments spans residues 125-145, 171-191, 228-248, 289-309, 324-344, 367-387, and 408-428; these read FGKWIICFMIGVLVGITAYLV, IAFLVYYSINILFGVSASLVI, LVSLILAYSSGLILGPEGPMI, GAAAGVAAAFGAPIGGVLFGF, TFFACLIATFTTNIILQGFDM, LIPFALIGVAGGLFGALFVNL, and VLEVFILITITSTILYCCAAF. The tract at residues 434–460 is disordered; sequence KTQANGSQTNSLDTSSSSILSSSGDNS. A compositionally biased stretch (low complexity) spans 439 to 460; it reads GSQTNSLDTSSSSILSSSGDNS. 3 helical membrane-spanning segments follow: residues 518–538, 539–559, and 561–581; these read IFTIPTLAVFSLISFILTTIT, SGLMLASGLFIPMMLVGATFG, and LVGQVIALFVSVDPCIYALVG. CBS domains are found at residues 661–742 and 816–863; these read MKTE…CHEQ and MNLS…KDLL.

This sequence belongs to the chloride channel (TC 2.A.49) family.

Its subcellular location is the membrane. Its function is as follows. Voltage-gated chloride channel. Chloride channels may have several functions including the regulation of cell volume, membrane potential stabilization and signal transduction. The polypeptide is Chloride channel protein A (clcA) (Dictyostelium discoideum (Social amoeba)).